We begin with the raw amino-acid sequence, 519 residues long: Glutamate--cysteine ligase (519 aa).

Belongs to the glutamate--cysteine ligase type 1 family. Type 1 subfamily.

The catalysed reaction is L-cysteine + L-glutamate + ATP = gamma-L-glutamyl-L-cysteine + ADP + phosphate + H(+). It participates in sulfur metabolism; glutathione biosynthesis; glutathione from L-cysteine and L-glutamate: step 1/2. This is Glutamate--cysteine ligase from Edwardsiella ictaluri (strain 93-146).